A 191-amino-acid polypeptide reads, in one-letter code: Peptidyl-tRNA hydrolase (191 aa).

Residue Tyr-14 coordinates tRNA. His-19 serves as the catalytic Proton acceptor. Tyr-64, Asn-66, and Asn-112 together coordinate tRNA.

The protein belongs to the PTH family. Monomer.

Its subcellular location is the cytoplasm. The enzyme catalyses an N-acyl-L-alpha-aminoacyl-tRNA + H2O = an N-acyl-L-amino acid + a tRNA + H(+). Hydrolyzes ribosome-free peptidyl-tRNAs (with 1 or more amino acids incorporated), which drop off the ribosome during protein synthesis, or as a result of ribosome stalling. Its function is as follows. Catalyzes the release of premature peptidyl moieties from peptidyl-tRNA molecules trapped in stalled 50S ribosomal subunits, and thus maintains levels of free tRNAs and 50S ribosomes. In Clostridium botulinum (strain Eklund 17B / Type B), this protein is Peptidyl-tRNA hydrolase.